Consider the following 249-residue polypeptide: Phosphatidylglycerol--prolipoprotein diacylglyceryl transferase (249 aa).

The next 7 membrane-spanning stretches (helical) occupy residues 11-31 (LKIY…VILL), 49-69 (AIVG…IVDI), 82-102 (LGNG…VYLY), 116-136 (LVVP…FLAG), 163-183 (LHPT…FLLW), 192-212 (GRVF…VEFL), and 223-243 (LSTS…VFNI). Arg-129 lines the a 1,2-diacyl-sn-glycero-3-phospho-(1'-sn-glycerol) pocket.

This sequence belongs to the Lgt family.

The protein resides in the cell membrane. It catalyses the reaction L-cysteinyl-[prolipoprotein] + a 1,2-diacyl-sn-glycero-3-phospho-(1'-sn-glycerol) = an S-1,2-diacyl-sn-glyceryl-L-cysteinyl-[prolipoprotein] + sn-glycerol 1-phosphate + H(+). Its pathway is protein modification; lipoprotein biosynthesis (diacylglyceryl transfer). Catalyzes the transfer of the diacylglyceryl group from phosphatidylglycerol to the sulfhydryl group of the N-terminal cysteine of a prolipoprotein, the first step in the formation of mature lipoproteins. The chain is Phosphatidylglycerol--prolipoprotein diacylglyceryl transferase from Clostridium tetani (strain Massachusetts / E88).